Consider the following 355-residue polypeptide: CRAL-TRIO domain-containing protein C365.01 (355 aa).

The region spanning 93 to 260 (ENGLNQNFVK…SMHGQFDETK (168 aa)) is the CRAL-TRIO domain.

The chain is CRAL-TRIO domain-containing protein C365.01 from Schizosaccharomyces pombe (strain 972 / ATCC 24843) (Fission yeast).